Here is a 511-residue protein sequence, read N- to C-terminus: 2'-acyl-2-O-sulfo-trehalose (hydroxy)phthioceranyltransferase PapA1 (511 aa).

It belongs to the PapA acyltransferase family.

It carries out the reaction a (hydroxy)phthioceranyl-[(hydroxy)phthioceranic acid synthase] + 2'-palmitoyl/stearoyl-2-O-sulfo-alpha,alpha-trehalose = a 3'-(hydroxy)phthioceranyl-2'-palmitoyl/stearoyl-2-O-sulfo-alpha,alpha-trehalose + holo-[(hydroxy)phthioceranic acid synthase].. Catalyzes the acylation of trehalose-2-sulfate-2'-palmitate (SL659) by adding the (hydroxy)phthioceranoyl group at the 3'-position to yield the diacylated intermediate 2-palmitoyl-3-(C43)-phthioceranyl-alpha, alpha'-D-trehalose-2'-sulfate (SL1278). This is 2'-acyl-2-O-sulfo-trehalose (hydroxy)phthioceranyltransferase PapA1 (papA1) from Mycobacterium bovis (strain BCG / Pasteur 1173P2).